The sequence spans 159 residues: Voltage-dependent N-type calcium channel subunit alpha-1B (159 aa).

A helical membrane pass occupies residues 1 to 5 (LVTEI). Residues 1 to 159 (LVTEIADTDN…LMLNLFVAVI (159 aa)) form an IV repeat. Residues 6–13 (ADTDNFIN) lie on the Extracellular side of the membrane. N13 is a glycosylation site (N-linked (GlcNAc...) asparagine). Residues 14–32 (LSFLRLFRAARLIKLLRQG) traverse the membrane as a helical segment. Topologically, residues 33–51 (YTIRILLWTFVQSFKALPY) are cytoplasmic. A helical transmembrane segment spans residues 52–71 (VCLLIAMLFFIYAIIGMQVF). Topologically, residues 72 to 135 (GNIALNDETS…LTKNECGSDF (64 aa)) are extracellular. Residues 136-155 (AYFYFVSFIFLCSFLMLNLF) form a helical membrane-spanning segment. Residues 156 to 159 (VAVI) lie on the Cytoplasmic side of the membrane.

The protein belongs to the calcium channel alpha-1 subunit (TC 1.A.1.11) family. CACNA1B subfamily. As to quaternary structure, multisubunit complex consisting of alpha-1, alpha-2, beta and delta subunits in a 1:1:1:1 ratio. The channel activity is directed by the pore-forming and voltage-sensitive alpha-1 subunit. In many cases, this subunit is sufficient to generate voltage-sensitive calcium channel activity. The auxiliary subunits beta and alpha-2/delta linked by a disulfide bridge regulate the channel activity. Interacts with RIMBP2. In terms of processing, phosphorylated in vitro by CaM-kinase II, PKA, PKC and CGPK.

The protein localises to the membrane. The enzyme catalyses Ca(2+)(in) = Ca(2+)(out). In terms of biological role, voltage-sensitive calcium channels (VSCC) mediate the entry of calcium ions into excitable cells and are also involved in a variety of calcium-dependent processes, including muscle contraction, hormone or neurotransmitter release, gene expression, cell motility, cell division and cell death. This alpha-1B subunit gives rise to N-type calcium currents. N-type calcium channels belong to the 'high-voltage activated' (HVA) group. They are involved in pain signaling. Calcium channels containing alpha-1B subunit may play a role in directed migration of immature neurons. Mediates Ca(2+) release probability at hippocampal neuronal soma and synaptic terminals. The chain is Voltage-dependent N-type calcium channel subunit alpha-1B (CACNA1B) from Gallus gallus (Chicken).